The chain runs to 214 residues: ATP phosphoribosyltransferase (214 aa).

Belongs to the ATP phosphoribosyltransferase family. Short subfamily. As to quaternary structure, heteromultimer composed of HisG and HisZ subunits.

The protein resides in the cytoplasm. The catalysed reaction is 1-(5-phospho-beta-D-ribosyl)-ATP + diphosphate = 5-phospho-alpha-D-ribose 1-diphosphate + ATP. The protein operates within amino-acid biosynthesis; L-histidine biosynthesis; L-histidine from 5-phospho-alpha-D-ribose 1-diphosphate: step 1/9. Its function is as follows. Catalyzes the condensation of ATP and 5-phosphoribose 1-diphosphate to form N'-(5'-phosphoribosyl)-ATP (PR-ATP). Has a crucial role in the pathway because the rate of histidine biosynthesis seems to be controlled primarily by regulation of HisG enzymatic activity. The polypeptide is ATP phosphoribosyltransferase (Nostoc punctiforme (strain ATCC 29133 / PCC 73102)).